A 150-amino-acid polypeptide reads, in one-letter code: Bcl-2-interacting killer (150 aa).

The BH3 signature appears at 51–65; it reads VALRLACIGDEMDLC. The helical transmembrane segment at 127 to 147 threads the bilayer; the sequence is PGQLFPMVLLVFLLLGGAWYL. A leucine-zipper region spans residues 127 to 148; it reads PGQLFPMVLLVFLLLGGAWYLQ.

As to quaternary structure, interacts with RHBDL4/RHBDD1. Interacts with BCL2L10/BCL-B. In terms of processing, proteolytically cleaved by RHBDL4/RHBDD1. RHBDL4/RHBDD1-induced cleavage is a necessary step prior its degradation by the proteosome-dependent mechanism. Ubiquitinated by the ECS(ASB11) complex in response to endoplasmic reticulum stress, leading to substrate recognition by the segregase p97/VCP and degradation by the proteasome. In terms of tissue distribution, expressed in testis, kidney, liver, lung and heart.

It localises to the endomembrane system. The protein resides in the mitochondrion membrane. Its function is as follows. Accelerates programmed cell death. Binding to the apoptosis repressors Bcl-X(L), BHRF1 or Bcl-2 suppresses this death-promoting activity. The polypeptide is Bcl-2-interacting killer (Bik) (Mus musculus (Mouse)).